We begin with the raw amino-acid sequence, 122 residues long: Ribosome-binding factor A (122 aa).

It belongs to the RbfA family. As to quaternary structure, monomer. Binds 30S ribosomal subunits, but not 50S ribosomal subunits or 70S ribosomes.

It localises to the cytoplasm. One of several proteins that assist in the late maturation steps of the functional core of the 30S ribosomal subunit. Associates with free 30S ribosomal subunits (but not with 30S subunits that are part of 70S ribosomes or polysomes). Required for efficient processing of 16S rRNA. May interact with the 5'-terminal helix region of 16S rRNA. The polypeptide is Ribosome-binding factor A (Halothermothrix orenii (strain H 168 / OCM 544 / DSM 9562)).